The following is a 245-amino-acid chain: Mannose/glucose-specific lectin (245 aa).

2 residues coordinate a carbohydrate: D87 and G107. Residue N119 is glycosylated (N-linked (GlcNAc...) asparagine). Positions 129 and 131 each coordinate Mn(2+). Ca(2+)-binding residues include D131 and F133. Residues S138 and N139 each coordinate a carbohydrate. Ca(2+) is bound by residues N139 and D142. The Mn(2+) site is built by D142 and H147. G221, E222, and Q223 together coordinate a carbohydrate.

It belongs to the leguminous lectin family. Homodimer.

Its function is as follows. Mannose/glucose-specific lectin that also binds derivatives N-acetyl-D-glucosamine and alpha-methyl-D-mannopyranoside with even higher affinity. Has hemagglutinating activity towards rabbit erythrocytes. Is toxic towards brine shrimp A.nauplii. In rats, induces dose-dependent paw edema. The sequence is that of Mannose/glucose-specific lectin from Centrolobium tomentosum (Arariba).